We begin with the raw amino-acid sequence, 364 residues long: Mannose-1-phosphate guanyltransferase (364 aa).

It belongs to the transferase hexapeptide repeat family.

The protein resides in the cytoplasm. It carries out the reaction alpha-D-mannose 1-phosphate + GTP + H(+) = GDP-alpha-D-mannose + diphosphate. It functions in the pathway nucleotide-sugar biosynthesis; GDP-alpha-D-mannose biosynthesis; GDP-alpha-D-mannose from alpha-D-mannose 1-phosphate (GTP route): step 1/1. Involved in cell wall synthesis where it is required for glycosylation. Involved in cell cycle progression through cell-size checkpoint. The protein is Mannose-1-phosphate guanyltransferase (mpg1) of Hypocrea jecorina (Trichoderma reesei).